A 396-amino-acid chain; its full sequence is MRSPASSRRASALHRLCDSCRACGLSKVRCSKEKPTCSRCRRRGTVCEYVVTKRPGRKPDSRSEVEPEPGHLSHPLPSPESSTAISQGNLPDPDAFDPLFALPEPFDSTPELHSGPLSTVDSSLSSALTTWCPDFDDFFSFPVSTEDTLSGDRGAVYDGTIKHPPNLRRHSESPPAVPDDTIYLFGKPVDPAPPDQSLPATTTIGRRASPPSGRESEAGSRRLSCRCLIRALDLLKHFEVIRREAEIESSLPSIDAVVEVNKQTTEAITGMLQCPCSQKDGYLLVLLALIVCKILDRYAAAAIPGTEQGHDPTRRLDEGPMAGQRVLGELHCIQRVMNQLGPRLRMHGAQGASPGQAFHGTPAPLSVGLGDQLEPELHQRLSRLSSEIIRLLREAQ.

The zn(2)-C6 fungal-type DNA-binding region spans 20–47 (CRACGLSKVRCSKEKPTCSRCRRRGTVC). Disordered stretches follow at residues 54-120 (RPGR…LSTV), 190-218 (DPAPPDQSLPATTTIGRRASPPSGRESEA), and 346-365 (MHGAQGASPGQAFHGTPAPL). Residues 57–71 (RKPDSRSEVEPEPGH) are compositionally biased toward basic and acidic residues. Positions 72 to 82 (LSHPLPSPESS) are enriched in low complexity.

As to expression, specifically expressed in conidia.

The protein localises to the nucleus. Transcription factor that regulates the expression of the gene clusters that mediate the biosynthesis of trypacidin, a metabolite with antiprotozoal activity and a possible role in the infection process. Trypacidin is toxic for human pulmonary and bronchial epithelial cells by initiating the intracellular formation of nitric oxide (NO) and hydrogen peroxide (H(2)O(2)), thus triggering host necrotic cell death. The sequence is that of Trypacidin cluster transcription factor from Aspergillus fumigatus (strain ATCC MYA-4609 / CBS 101355 / FGSC A1100 / Af293) (Neosartorya fumigata).